A 332-amino-acid polypeptide reads, in one-letter code: Holliday junction branch migration complex subunit RuvB (332 aa).

The interval 1 to 181 (MSRILDNEIM…FGITGHMEYY (181 aa)) is large ATPase domain (RuvB-L). Residues Leu-20, Arg-21, Gly-62, Lys-65, Thr-66, Thr-67, 128-130 (EDF), Arg-171, Tyr-181, and Arg-218 each bind ATP. Residue Thr-66 participates in Mg(2+) binding. The interval 182–252 (AHADLTEIVE…ITDKALTMLD (71 aa)) is small ATPAse domain (RuvB-S). Residues 255–332 (HEGLDYVDQK…EHLGYEYSEK (78 aa)) form a head domain (RuvB-H) region. 4 residues coordinate DNA: Arg-291, Arg-310, Arg-312, and Arg-315.

The protein belongs to the RuvB family. In terms of assembly, homohexamer. Forms an RuvA(8)-RuvB(12)-Holliday junction (HJ) complex. HJ DNA is sandwiched between 2 RuvA tetramers; dsDNA enters through RuvA and exits via RuvB. An RuvB hexamer assembles on each DNA strand where it exits the tetramer. Each RuvB hexamer is contacted by two RuvA subunits (via domain III) on 2 adjacent RuvB subunits; this complex drives branch migration. In the full resolvosome a probable DNA-RuvA(4)-RuvB(12)-RuvC(2) complex forms which resolves the HJ.

Its subcellular location is the cytoplasm. The catalysed reaction is ATP + H2O = ADP + phosphate + H(+). The RuvA-RuvB-RuvC complex processes Holliday junction (HJ) DNA during genetic recombination and DNA repair, while the RuvA-RuvB complex plays an important role in the rescue of blocked DNA replication forks via replication fork reversal (RFR). RuvA specifically binds to HJ cruciform DNA, conferring on it an open structure. The RuvB hexamer acts as an ATP-dependent pump, pulling dsDNA into and through the RuvAB complex. RuvB forms 2 homohexamers on either side of HJ DNA bound by 1 or 2 RuvA tetramers; 4 subunits per hexamer contact DNA at a time. Coordinated motions by a converter formed by DNA-disengaged RuvB subunits stimulates ATP hydrolysis and nucleotide exchange. Immobilization of the converter enables RuvB to convert the ATP-contained energy into a lever motion, pulling 2 nucleotides of DNA out of the RuvA tetramer per ATP hydrolyzed, thus driving DNA branch migration. The RuvB motors rotate together with the DNA substrate, which together with the progressing nucleotide cycle form the mechanistic basis for DNA recombination by continuous HJ branch migration. Branch migration allows RuvC to scan DNA until it finds its consensus sequence, where it cleaves and resolves cruciform DNA. The polypeptide is Holliday junction branch migration complex subunit RuvB (Streptococcus pneumoniae serotype 2 (strain D39 / NCTC 7466)).